The primary structure comprises 270 residues: MKVIMTTKIDKASMNIREKLIENFGFTESNLTFDGNRVYEKEDILILTTNEEMIYYDYLDKEIEKQTKIKPEVIVFASRHSSAKKLPSLTTHVTGNWGKAMYGGKDESFAIAFPSAMKLALLKMHELNDLGWTVCYEATHHGPSELEVPSLFIEIGSSEEEWVNDRAGEIIAETIMYVLKKREKFKVALGIGGGHYAPKQTKVALESDLAFSHILPKYAQPVKKEVILRALSRSTEEVEAIYVDWKGSRGETRQLAKELANELGLEFIKD.

Belongs to the DtdA deacylase family. In terms of assembly, monomer. Zn(2+) serves as cofactor.

The catalysed reaction is a D-aminoacyl-tRNA + H2O = a tRNA + a D-alpha-amino acid + H(+). It catalyses the reaction glycyl-tRNA(Ala) + H2O = tRNA(Ala) + glycine + H(+). D-aminoacyl-tRNA deacylase with broad substrate specificity. By recycling D-aminoacyl-tRNA to D-amino acids and free tRNA molecules, this enzyme counteracts the toxicity associated with the formation of D-aminoacyl-tRNA entities in vivo. The polypeptide is D-aminoacyl-tRNA deacylase (Pyrococcus furiosus (strain ATCC 43587 / DSM 3638 / JCM 8422 / Vc1)).